A 382-amino-acid polypeptide reads, in one-letter code: Succinate--CoA ligase [ADP-forming] subunit beta (382 aa).

In terms of domain architecture, ATP-grasp spans 9–240 (KELFLRYGVK…PRDITEFEAY (232 aa)). Residues Lys-45, 52–54 (GRG), Val-94, and Glu-99 contribute to the ATP site. 2 residues coordinate Mg(2+): Asn-193 and Asp-207. Residues Asn-260 and 317–319 (GIT) each bind substrate.

The protein belongs to the succinate/malate CoA ligase beta subunit family. In terms of assembly, heterotetramer of two alpha and two beta subunits. Mg(2+) is required as a cofactor.

The enzyme catalyses succinate + ATP + CoA = succinyl-CoA + ADP + phosphate. The catalysed reaction is GTP + succinate + CoA = succinyl-CoA + GDP + phosphate. The protein operates within carbohydrate metabolism; tricarboxylic acid cycle; succinate from succinyl-CoA (ligase route): step 1/1. Functionally, succinyl-CoA synthetase functions in the citric acid cycle (TCA), coupling the hydrolysis of succinyl-CoA to the synthesis of either ATP or GTP and thus represents the only step of substrate-level phosphorylation in the TCA. The beta subunit provides nucleotide specificity of the enzyme and binds the substrate succinate, while the binding sites for coenzyme A and phosphate are found in the alpha subunit. The protein is Succinate--CoA ligase [ADP-forming] subunit beta of Pyrobaculum islandicum (strain DSM 4184 / JCM 9189 / GEO3).